The sequence spans 483 residues: Glutamyl-tRNA(Gln) amidotransferase subunit A (483 aa).

Active-site charge relay system residues include K76 and S151. S175 acts as the Acyl-ester intermediate in catalysis.

This sequence belongs to the amidase family. GatA subfamily. In terms of assembly, heterotrimer of A, B and C subunits.

It carries out the reaction L-glutamyl-tRNA(Gln) + L-glutamine + ATP + H2O = L-glutaminyl-tRNA(Gln) + L-glutamate + ADP + phosphate + H(+). Allows the formation of correctly charged Gln-tRNA(Gln) through the transamidation of misacylated Glu-tRNA(Gln) in organisms which lack glutaminyl-tRNA synthetase. The reaction takes place in the presence of glutamine and ATP through an activated gamma-phospho-Glu-tRNA(Gln). The protein is Glutamyl-tRNA(Gln) amidotransferase subunit A of Nitrosococcus oceani (strain ATCC 19707 / BCRC 17464 / JCM 30415 / NCIMB 11848 / C-107).